The chain runs to 209 residues: Large ribosomal subunit protein uL3 (209 aa).

The disordered stretch occupies residues 127–152; that stretch reads SGGPSSHGSKFHRHLGSTGQAATPSR. Residues 143–152 are compositionally biased toward polar residues; the sequence is STGQAATPSR.

This sequence belongs to the universal ribosomal protein uL3 family. In terms of assembly, part of the 50S ribosomal subunit. Forms a cluster with proteins L14 and L19.

Its function is as follows. One of the primary rRNA binding proteins, it binds directly near the 3'-end of the 23S rRNA, where it nucleates assembly of the 50S subunit. In Borrelia hermsii (strain HS1 / DAH), this protein is Large ribosomal subunit protein uL3.